A 305-amino-acid chain; its full sequence is Ribonuclease HIII (305 aa).

In terms of domain architecture, RNase H type-2 spans 91–305 (WSVIGSDEVG…ANTQKAQKLL (215 aa)). Asp-97, Glu-98, and Asp-201 together coordinate a divalent metal cation.

It belongs to the RNase HII family. RnhC subfamily. Requires Mn(2+) as cofactor. Mg(2+) serves as cofactor.

It localises to the cytoplasm. The catalysed reaction is Endonucleolytic cleavage to 5'-phosphomonoester.. In terms of biological role, endonuclease that specifically degrades the RNA of RNA-DNA hybrids. In Enterococcus faecalis (strain ATCC 700802 / V583), this protein is Ribonuclease HIII.